Reading from the N-terminus, the 298-residue chain is Acetylglutamate kinase (298 aa).

Substrate contacts are provided by residues 68-69, arginine 90, and asparagine 195; that span reads GG.

The protein belongs to the acetylglutamate kinase family. ArgB subfamily.

It localises to the cytoplasm. The enzyme catalyses N-acetyl-L-glutamate + ATP = N-acetyl-L-glutamyl 5-phosphate + ADP. It participates in amino-acid biosynthesis; L-arginine biosynthesis; N(2)-acetyl-L-ornithine from L-glutamate: step 2/4. Its function is as follows. Catalyzes the ATP-dependent phosphorylation of N-acetyl-L-glutamate. The protein is Acetylglutamate kinase of Hydrogenovibrio crunogenus (strain DSM 25203 / XCL-2) (Thiomicrospira crunogena).